The chain runs to 287 residues: Protease HtpX (287 aa).

Transmembrane regions (helical) follow at residues 4-24 (IFLL…VMSI) and 33-53 (GGLL…SLAI). His-139 contributes to the Zn(2+) binding site. Glu-140 is a catalytic residue. Position 143 (His-143) interacts with Zn(2+). Helical transmembrane passes span 154 to 174 (LIQG…AGII) and 195 to 215 (AVVF…VAYF). Zn(2+) is bound at residue Glu-220.

Belongs to the peptidase M48B family. Zn(2+) serves as cofactor.

The protein resides in the cell inner membrane. The protein is Protease HtpX of Shewanella halifaxensis (strain HAW-EB4).